Reading from the N-terminus, the 286-residue chain is S-adenosylmethionine-dependent methyltransferase UmaA (286 aa).

Residues 32–33 (YT), 67–75 (LLDIGCGWG), 93–98 (TLSRNQ), and 122–123 (WD) each bind S-adenosyl-L-methionine. The active site involves Cys268.

It belongs to the CFA/CMAS family.

It localises to the cytoplasm. Methyltransferase that modifies short-chain fatty acids. In vitro, catalyzes the transfer of the methyl group from S-adenosyl-L-methionine (SAM) to the double bond of phospholipid-linked oleic acid to produce tuberculostearic acid (10-methylstearic-acid or TSA). The protein is S-adenosylmethionine-dependent methyltransferase UmaA of Mycobacterium tuberculosis (strain ATCC 25618 / H37Rv).